The chain runs to 152 residues: Ribosome maturation factor RimP (152 aa).

Belongs to the RimP family.

It is found in the cytoplasm. In terms of biological role, required for maturation of 30S ribosomal subunits. In Shigella boydii serotype 4 (strain Sb227), this protein is Ribosome maturation factor RimP.